The primary structure comprises 180 residues: Nucleoside triphosphate/diphosphate phosphatase (180 aa).

Residue Arg-26 is the Proton donor of the active site. 6 residues coordinate Mg(2+): Asn-90, Asp-106, Asp-108, Asp-110, Asp-123, and Glu-126.

Belongs to the Ntdp family. It depends on Mg(2+) as a cofactor.

It catalyses the reaction a ribonucleoside 5'-triphosphate + H2O = a ribonucleoside 5'-diphosphate + phosphate + H(+). The catalysed reaction is a ribonucleoside 5'-diphosphate + H2O = a ribonucleoside 5'-phosphate + phosphate + H(+). Functionally, has nucleoside phosphatase activity towards nucleoside triphosphates and nucleoside diphosphates. The sequence is that of Nucleoside triphosphate/diphosphate phosphatase from Staphylococcus haemolyticus (strain JCSC1435).